Reading from the N-terminus, the 152-residue chain is Small ribosomal subunit protein uS19u (152 aa).

It belongs to the universal ribosomal protein uS19 family.

It localises to the cytoplasm. This Arabidopsis thaliana (Mouse-ear cress) protein is Small ribosomal subunit protein uS19u (RPS15A).